The sequence spans 764 residues: MIKPILGTKKIRRVICIIIGLFCILLLIGIFKHNSTNSVNNEASNFTVDFEEPSYTFPKTVLFENNNNLDDLLLAKKNNWKFQSNVYNQLFMDHSIESVLSLSFNQRCELLIRNIISQKVSWIFDPLETFEINYESEDYIQFIQQEGIKLNKKFEKIKNNLKFKTSLNNFIKDEYKIIRSKQYEQKIIDQLTILRIFNKCFIKNGSKDQNDLVDRIIQEQQKLVTKANSAANGQSELELELKLKLKLTENEKMVSELVEDYVTLGKRVYPWISQRFPFYERWNGDSYYYPPNYEEIFKDKNEPLKSERSTVRDSTSSPSIFLNQFKDASNGKGIVLSITEKHIDDTINLIRLLRALNNKLPIQIIYFNDISQSSKTKIIKAAREEINNFPKSYEKVYHGKQPSVPPSPPPPQEVWFVNIYESINPQHRNLFAKFDFKLLASLFNSFNEFMLIDADTILMKSPEFFFNHQSYQQTGAFFFKDRSPLLKRPITDGEFLIKMGPSSIDSIMFDIPMMTQYTTHRELFKGLRLYMESGLVMIDKQRRRHFNSILMMNQLKFIHPISNSMWGDKELFWLGFAINGDENYKFNNHFAAAIGQLTSNQYNKDRRTPLKSKEICSSHPGHISDEDDRSLLWFNSGFRFCHEANNIDYQEETKNNVILKFLNGRHPLEFKKYYSDPLRITHAIVPPLNKNFQKMYNYDEEPTDGWTSEPNCNKYMWCAYSSIGGRTGPEETSHKETLDGLLVEYTPEEIAYFNYLGDVWVGKY.

Over 1-13 the chain is Cytoplasmic; sequence MIKPILGTKKIRR. A helical membrane pass occupies residues 14-34; sequence VICIIIGLFCILLLIGIFKHN. The Lumenal portion of the chain corresponds to 35 to 764; sequence STNSVNNEAS…YLGDVWVGKY (730 aa). Asn-45 and Asn-204 each carry an N-linked (GlcNAc...) asparagine glycan.

It belongs to the MNN1/MNT family.

It is found in the golgi apparatus membrane. It participates in protein modification; protein glycosylation. In terms of biological role, responsible for addition of the terminal mannose residues to the outer chain of core N-linked polysaccharides and to O-linked mannotriose. Implicated in late Golgi modifications. This Candida albicans (strain SC5314 / ATCC MYA-2876) (Yeast) protein is Putative alpha-1,3-mannosyltransferase MNN13 (MNN13).